Consider the following 437-residue polypeptide: UDP-N-acetylmuramoylalanine--D-glutamate ligase (437 aa).

Residue 115 to 121 coordinates ATP; it reads GSNGKST.

This sequence belongs to the MurCDEF family.

It is found in the cytoplasm. The catalysed reaction is UDP-N-acetyl-alpha-D-muramoyl-L-alanine + D-glutamate + ATP = UDP-N-acetyl-alpha-D-muramoyl-L-alanyl-D-glutamate + ADP + phosphate + H(+). The protein operates within cell wall biogenesis; peptidoglycan biosynthesis. Its function is as follows. Cell wall formation. Catalyzes the addition of glutamate to the nucleotide precursor UDP-N-acetylmuramoyl-L-alanine (UMA). This chain is UDP-N-acetylmuramoylalanine--D-glutamate ligase, found in Vibrio campbellii (strain ATCC BAA-1116).